The primary structure comprises 594 residues: SHC-transforming protein 3 (594 aa).

A disordered region spans residues 98–147; it reads GSCSAPSLAAPDGSAPSAPRAPAMSAARKGRPGDEPLPRPPRGAPHASDQ. Over residues 101-124 the composition is skewed to low complexity; the sequence is SAPSLAAPDGSAPSAPRAPAMSAA. The 186-residue stretch at 149–334 folds into the PID domain; sequence LGPGVTYVVK…LDEPWTEEEG (186 aa). Positions 335-498 are CH1; sequence DGSDHPYYNS…KMLEELQAET (164 aa). Disordered stretches follow at residues 351 to 373 and 386 to 405; these read PPGG…AQFA and GDTF…SSDI. A compositionally biased stretch (polar residues) spans 393–405; that stretch reads WQQTPLRQGSSDI. Phosphoserine is present on S402. An SH2 domain is found at 499–590; the sequence is WYQGEMSRKE…GSELCLQQPV (92 aa).

In terms of assembly, interacts with the Trk receptors in a phosphotyrosine-dependent manner. Once activated, binds to GRB2. Interacts with activated EGF receptors. In terms of processing, tyrosine phosphorylated. Mainly expressed in brain. Hardly detectable in other tissues, except in pancreas. Highly expressed in the cerebral cortex, frontal and temporal lobes, occipital pole, hippocampus, caudate nucleus and amygdala. Expressed at low level in the cerebellum, medulla and spinal cord.

In terms of biological role, signaling adapter that couples activated growth factor receptors to signaling pathway in neurons. Involved in the signal transduction pathways of neurotrophin-activated Trk receptors in cortical neurons. This is SHC-transforming protein 3 (SHC3) from Homo sapiens (Human).